We begin with the raw amino-acid sequence, 471 residues long: Histidinol dehydrogenase (471 aa).

NAD(+)-binding residues include Tyr139, Gln204, and Asn236. 3 residues coordinate substrate: Thr259, Gln281, and His284. Zn(2+)-binding residues include Gln281 and His284. Catalysis depends on proton acceptor residues Glu350 and His351. Substrate is bound by residues His351, Asp384, Glu438, and His443. Residue Asp384 coordinates Zn(2+). His443 is a binding site for Zn(2+).

Belongs to the histidinol dehydrogenase family. Requires Zn(2+) as cofactor.

It carries out the reaction L-histidinol + 2 NAD(+) + H2O = L-histidine + 2 NADH + 3 H(+). The protein operates within amino-acid biosynthesis; L-histidine biosynthesis; L-histidine from 5-phospho-alpha-D-ribose 1-diphosphate: step 9/9. Its function is as follows. Catalyzes the sequential NAD-dependent oxidations of L-histidinol to L-histidinaldehyde and then to L-histidine. In Bifidobacterium longum (strain NCC 2705), this protein is Histidinol dehydrogenase.